A 1414-amino-acid polypeptide reads, in one-letter code: Phenyloxazoline synthase MbtB (1414 aa).

In terms of domain architecture, Carrier 1 spans 5-78 (TACSEIIRAE…AWSQLVSAGT (74 aa)). Position 39 is an O-(pantetheine 4'-phosphoryl)serine (serine 39). The tract at residues 96 to 394 (EGEPFPLAPM…SSLLLDVDLT (299 aa)) is condensation/cyclization. Positions 579–975 (SYAQLRDQAS…RLPGVHAAAA (397 aa)) are adenylation. The 79-residue stretch at 1057–1135 (APRTVLQRAL…ALAQLLTGRE (79 aa)) folds into the Carrier 2 domain. O-(pantetheine 4'-phosphoryl)serine is present on serine 1094. A thioesterase region spans residues 1188–1413 (GAVLVFPHAG…AVARMVSADV (226 aa)).

This sequence belongs to the ATP-dependent AMP-binding enzyme family. MbtB subfamily. It depends on pantetheine 4'-phosphate as a cofactor. Post-translationally, 4'-phosphopantetheine is transferred from CoA to a specific serine in each of the two carrier protein domains, leading to their activation from apo to holo forms.

Its pathway is siderophore biosynthesis; mycobactin biosynthesis. In terms of biological role, involved in the initial steps of the mycobactin biosynthetic pathway. Putatively couples activated salicylic acid with serine or threonine and cyclizes this precursor to the hydroxyphenyloxazoline ring system present in this class of siderophores. Essential for growth in macrophages. This Mycobacterium tuberculosis (strain ATCC 25618 / H37Rv) protein is Phenyloxazoline synthase MbtB (mbtB).